A 630-amino-acid polypeptide reads, in one-letter code: NUAK family SNF1-like kinase 2 (630 aa).

Position 1 is an N-acetylmethionine (Met1). The region spanning 57-307 (YEFLETLGKG…LEDVASHWWV (251 aa)) is the Protein kinase domain. Residues 63 to 71 (LGKGTYGKV) and Lys85 each bind ATP. Asp179 functions as the Proton acceptor in the catalytic mechanism. The residue at position 212 (Thr212) is a Phosphothreonine. 2 disordered regions span residues 361 to 504 (HVPG…RLHR) and 521 to 566 (GTAP…LDLP). Over residues 464–476 (SGYYSSPEPSESG) the composition is skewed to low complexity. Residues Ser529, Ser550, Ser553, and Ser579 each carry the phosphoserine modification.

It belongs to the protein kinase superfamily. CAMK Ser/Thr protein kinase family. SNF1 subfamily. Mg(2+) is required as a cofactor. Post-translationally, phosphorylated at Thr-212 by STK11/LKB1 in complex with STE20-related adapter-alpha (STRADA) pseudo kinase and CAB39. Autophosphorylation is also possible at Thr-212. Expressed in liver, skin, testis, uterus, ovary, adrenal gland and brain (at protein level). Expressed in kidney, heart, skin, spleen, lung, uterus, liver and the exocrine and endocrine compartments of the human pancreas. A kinase-inactive isoform also appears to be expressed in the skin, spleen, lung, uterus, liver and testis.

It catalyses the reaction L-seryl-[protein] + ATP = O-phospho-L-seryl-[protein] + ADP + H(+). The enzyme catalyses L-threonyl-[protein] + ATP = O-phospho-L-threonyl-[protein] + ADP + H(+). Its activity is regulated as follows. Activated by phosphorylation on Thr-212 by STK11 in complex with STE20-related adapter-alpha (STRAD alpha) pseudo kinase and CAB39. Stress-activated kinase involved in tolerance to glucose starvation. Induces cell-cell detachment by increasing F-actin conversion to G-actin. Expression is induced by CD95 or TNF-alpha, via NF-kappa-B. Protects cells from CD95-mediated apoptosis and is required for the increased motility and invasiveness of CD95-activated tumor cells. Phosphorylates LATS1 and LATS2. Plays a key role in neural tube closure during embryonic development through LATS2 phosphorylation and regulation of the nuclear localization of YAP1 a critical downstream regulatory target in the Hippo signaling pathway. The chain is NUAK family SNF1-like kinase 2 from Rattus norvegicus (Rat).